The primary structure comprises 342 residues: Anthranilate phosphoribosyltransferase (342 aa).

5-phospho-alpha-D-ribose 1-diphosphate contacts are provided by residues Gly79, 82-83 (GD), Thr87, 89-92 (NVST), 107-115 (KHGNRAATS), and Ser119. Gly79 is an anthranilate binding site. Residue Ser91 coordinates Mg(2+). Asn110 is an anthranilate binding site. An anthranilate-binding site is contributed by Arg165. Mg(2+) is bound by residues Asp224 and Glu225.

Belongs to the anthranilate phosphoribosyltransferase family. In terms of assembly, homodimer. The cofactor is Mg(2+).

The enzyme catalyses N-(5-phospho-beta-D-ribosyl)anthranilate + diphosphate = 5-phospho-alpha-D-ribose 1-diphosphate + anthranilate. It functions in the pathway amino-acid biosynthesis; L-tryptophan biosynthesis; L-tryptophan from chorismate: step 2/5. Its function is as follows. Catalyzes the transfer of the phosphoribosyl group of 5-phosphorylribose-1-pyrophosphate (PRPP) to anthranilate to yield N-(5'-phosphoribosyl)-anthranilate (PRA). The protein is Anthranilate phosphoribosyltransferase of Rubrobacter xylanophilus (strain DSM 9941 / JCM 11954 / NBRC 16129 / PRD-1).